The following is a 245-amino-acid chain: DNA polymerase sliding clamp (245 aa).

This sequence belongs to the PCNA family. As to quaternary structure, homotrimer. The subunits circularize to form a toroid; DNA passes through its center. Replication factor C (RFC) is required to load the toroid on the DNA.

In terms of biological role, sliding clamp subunit that acts as a moving platform for DNA processing. Responsible for tethering the catalytic subunit of DNA polymerase and other proteins to DNA during high-speed replication. This Methanosarcina acetivorans (strain ATCC 35395 / DSM 2834 / JCM 12185 / C2A) protein is DNA polymerase sliding clamp.